A 127-amino-acid chain; its full sequence is Alpha-hordothionin (127 aa).

Residues Met-1 to Gly-18 form the signal peptide. 4 disulfides stabilise this stretch: Cys-21–Cys-57, Cys-22–Cys-49, Cys-30–Cys-47, and Cys-34–Cys-43. Residues Leu-64–Ala-127 constitute a propeptide, acidic domain.

This sequence belongs to the plant thionin (TC 1.C.44) family. 4 C-C subfamily.

The protein localises to the secreted. In terms of biological role, thionins are small plant proteins which are toxic to animal cells. They seem to exert their toxic effect at the level of the cell membrane. Their precise function is not known. In Hordeum vulgare (Barley), this protein is Alpha-hordothionin (THI1.1).